The primary structure comprises 218 residues: Large ribosomal subunit protein uL4 (218 aa).

Residues 54–106 are disordered; it reads GTHAVKNRGAVSGGGRKPWKQKGTGRARQGSIRAPQWYHGGVAHGPVPRDYSQ.

The protein belongs to the universal ribosomal protein uL4 family. As to quaternary structure, part of the 50S ribosomal subunit.

Functionally, one of the primary rRNA binding proteins, this protein initially binds near the 5'-end of the 23S rRNA. It is important during the early stages of 50S assembly. It makes multiple contacts with different domains of the 23S rRNA in the assembled 50S subunit and ribosome. In terms of biological role, forms part of the polypeptide exit tunnel. The chain is Large ribosomal subunit protein uL4 from Bifidobacterium animalis subsp. lactis (strain AD011).